Consider the following 141-residue polypeptide: Hemoglobin subunit beta-C(NA) (141 aa).

The Globin domain occupies 1–141 (PBKALITGFW…VASALAHRYH (141 aa)). Heme b is bound by residues His58 and His87.

This sequence belongs to the globin family. In terms of assembly, heterotetramer of two alpha chains and two beta chains. In terms of tissue distribution, red blood cells.

Functionally, involved in oxygen transport from the lung to the various peripheral tissues. The polypeptide is Hemoglobin subunit beta-C(NA) (Ammotragus lervia (Barbary sheep)).